The following is a 93-amino-acid chain: N-myc protein (93 aa).

As to quaternary structure, efficient DNA binding requires dimerization with another bHLH protein. Binds DNA as a heterodimer with MAX. Barely detectable in most tissues assayed.

Its subcellular location is the nucleus. May function as a transcription factor. This chain is N-myc protein (mycn), found in Danio rerio (Zebrafish).